The chain runs to 567 residues: Dihydroxy-acid dehydratase 1 (567 aa).

Cysteine 57 contributes to the [2Fe-2S] cluster binding site. A Mg(2+)-binding site is contributed by aspartate 89. Cysteine 130 contacts [2Fe-2S] cluster. Mg(2+)-binding residues include aspartate 131 and lysine 132. N6-carboxylysine is present on lysine 132. Cysteine 202 contributes to the [2Fe-2S] cluster binding site. Residue glutamate 454 participates in Mg(2+) binding. Serine 480 serves as the catalytic Proton acceptor.

This sequence belongs to the IlvD/Edd family. As to quaternary structure, homodimer. The cofactor is [2Fe-2S] cluster. Mg(2+) is required as a cofactor.

It catalyses the reaction (2R)-2,3-dihydroxy-3-methylbutanoate = 3-methyl-2-oxobutanoate + H2O. The enzyme catalyses (2R,3R)-2,3-dihydroxy-3-methylpentanoate = (S)-3-methyl-2-oxopentanoate + H2O. The protein operates within amino-acid biosynthesis; L-isoleucine biosynthesis; L-isoleucine from 2-oxobutanoate: step 3/4. It participates in amino-acid biosynthesis; L-valine biosynthesis; L-valine from pyruvate: step 3/4. In terms of biological role, functions in the biosynthesis of branched-chain amino acids. Catalyzes the dehydration of (2R,3R)-2,3-dihydroxy-3-methylpentanoate (2,3-dihydroxy-3-methylvalerate) into 2-oxo-3-methylpentanoate (2-oxo-3-methylvalerate) and of (2R)-2,3-dihydroxy-3-methylbutanoate (2,3-dihydroxyisovalerate) into 2-oxo-3-methylbutanoate (2-oxoisovalerate), the penultimate precursor to L-isoleucine and L-valine, respectively. The sequence is that of Dihydroxy-acid dehydratase 1 from Aromatoleum aromaticum (strain DSM 19018 / LMG 30748 / EbN1) (Azoarcus sp. (strain EbN1)).